The sequence spans 485 residues: Calcium-dependent protein kinase 27 (485 aa).

The N-myristoyl glycine moiety is linked to residue glycine 2. The region spanning 28–290 (YILGEELGRG…AAEVLGHPWM (263 aa)) is the Protein kinase domain. ATP-binding positions include 34-42 (LGRGNFGLT) and lysine 57. Aspartate 156 serves as the catalytic Proton acceptor. Phosphoserine is present on serine 196. An autoinhibitory domain region spans residues 295 to 325 (ASDKPIDGVVLSRLKRFRDANKFKKVVLKFI). EF-hand domains lie at 332-367 (EEIK…LGSN), 368-403 (LSKT…RYKL), 404-439 (DRDE…DGAG), and 444-474 (IKQI…ESSL). Residues aspartate 345, aspartate 347, serine 349, asparagine 351, glutamate 356, aspartate 381, aspartate 383, asparagine 385, threonine 387, glutamate 392, aspartate 417, aspartate 419, aspartate 421, histidine 423, glutamate 428, aspartate 452, aspartate 454, aspartate 456, lysine 458, and glutamate 463 each contribute to the Ca(2+) site.

This sequence belongs to the protein kinase superfamily. Ser/Thr protein kinase family. CDPK subfamily.

The protein localises to the membrane. It carries out the reaction L-seryl-[protein] + ATP = O-phospho-L-seryl-[protein] + ADP + H(+). It catalyses the reaction L-threonyl-[protein] + ATP = O-phospho-L-threonyl-[protein] + ADP + H(+). Activated by calcium. Autophosphorylation may play an important role in the regulation of the kinase activity. Functionally, may play a role in signal transduction pathways that involve calcium as a second messenger. The chain is Calcium-dependent protein kinase 27 (CPK27) from Arabidopsis thaliana (Mouse-ear cress).